The following is a 357-amino-acid chain: Anthranilate phosphoribosyltransferase (357 aa).

5-phospho-alpha-D-ribose 1-diphosphate contacts are provided by residues G94, 97 to 98, T102, 104 to 107, 122 to 130, and G134; these read GD, NLST, and KHGNRAASS. G94 provides a ligand contact to anthranilate. Residue S106 participates in Mg(2+) binding. N125 is a binding site for anthranilate. Residue R180 participates in anthranilate binding. Residues D238 and E239 each contribute to the Mg(2+) site.

The protein belongs to the anthranilate phosphoribosyltransferase family. Homodimer. Requires Mg(2+) as cofactor.

The catalysed reaction is N-(5-phospho-beta-D-ribosyl)anthranilate + diphosphate = 5-phospho-alpha-D-ribose 1-diphosphate + anthranilate. Its pathway is amino-acid biosynthesis; L-tryptophan biosynthesis; L-tryptophan from chorismate: step 2/5. Catalyzes the transfer of the phosphoribosyl group of 5-phosphorylribose-1-pyrophosphate (PRPP) to anthranilate to yield N-(5'-phosphoribosyl)-anthranilate (PRA). The chain is Anthranilate phosphoribosyltransferase from Mycobacterium sp. (strain JLS).